A 231-amino-acid chain; its full sequence is ADP-ribose pyrophosphatase (231 aa).

At Phe-2 the chain carries N-acetylserine. Substrate is bound by residues Trp-46, 64-65 (WD), Arg-69, and Arg-103. The region spanning 75-214 (GGVDGIGILT…DQQGYKLDAR (140 aa)) is the Nudix hydrolase domain. Ala-115 contributes to the Mg(2+) binding site. The Nudix box signature appears at 116-137 (GLIDAGEDIDTAALRELKEETG). Leu-117 serves as a coordination point for substrate. Mg(2+) contacts are provided by Glu-131 and Glu-135. Asp-152 contributes to the substrate binding site. Glu-185 contacts Mg(2+).

Belongs to the Nudix hydrolase family. NudF subfamily. Mg(2+) serves as cofactor. The cofactor is Mn(2+).

The enzyme catalyses ADP-D-ribose + H2O = D-ribose 5-phosphate + AMP + 2 H(+). The polypeptide is ADP-ribose pyrophosphatase (YSA1) (Saccharomyces cerevisiae (strain ATCC 204508 / S288c) (Baker's yeast)).